We begin with the raw amino-acid sequence, 250 residues long: Uracil-DNA glycosylase (250 aa).

The active-site Proton acceptor is Asp78. The disordered stretch occupies residues Arg228–Leu250.

This sequence belongs to the uracil-DNA glycosylase (UDG) superfamily. UNG family.

Its subcellular location is the cytoplasm. The enzyme catalyses Hydrolyzes single-stranded DNA or mismatched double-stranded DNA and polynucleotides, releasing free uracil.. Its function is as follows. Excises uracil residues from the DNA which can arise as a result of misincorporation of dUMP residues by DNA polymerase or due to deamination of cytosine. The chain is Uracil-DNA glycosylase from Bordetella parapertussis (strain 12822 / ATCC BAA-587 / NCTC 13253).